The chain runs to 201 residues: 3-isopropylmalate dehydratase small subunit (201 aa).

It belongs to the LeuD family. LeuD type 1 subfamily. Heterodimer of LeuC and LeuD.

The enzyme catalyses (2R,3S)-3-isopropylmalate = (2S)-2-isopropylmalate. It participates in amino-acid biosynthesis; L-leucine biosynthesis; L-leucine from 3-methyl-2-oxobutanoate: step 2/4. Catalyzes the isomerization between 2-isopropylmalate and 3-isopropylmalate, via the formation of 2-isopropylmaleate. This chain is 3-isopropylmalate dehydratase small subunit, found in Rhodopseudomonas palustris (strain HaA2).